We begin with the raw amino-acid sequence, 492 residues long: Alpha-amylase-related protein (492 aa).

A signal peptide spans Met-1–Ala-18. Gln-19 carries the pyrrolidone carboxylic acid modification. A disulfide bond links Cys-46 and Cys-102. 3 residues coordinate Ca(2+): Asn-116, Gln-167, and Asp-176. Cysteines 155 and 169 form a disulfide. A chloride-binding site is contributed by Arg-204. Asp-206 acts as the Nucleophile in catalysis. His-210 is a binding site for Ca(2+). Glu-243 serves as the catalytic Proton donor. Asn-306 and Arg-341 together coordinate chloride. Intrachain disulfides connect Cys-374–Cys-380, Cys-416–Cys-439, and Cys-446–Cys-458.

This sequence belongs to the glycosyl hydrolase 13 family. Monomer. Ca(2+) is required as a cofactor. The cofactor is chloride.

Its subcellular location is the secreted. The catalysed reaction is Endohydrolysis of (1-&gt;4)-alpha-D-glucosidic linkages in polysaccharides containing three or more (1-&gt;4)-alpha-linked D-glucose units.. This Drosophila willistoni (Fruit fly) protein is Alpha-amylase-related protein (Amyrel).